The sequence spans 367 residues: Ribosomal lysine N-methyltransferase 5 (367 aa).

Positions 55–74 (EGGRKKKRVRRRNKASSVEE) are disordered. The span at 58–68 (RKKKRVRRRNK) shows a compositional bias: basic residues. S-adenosyl-L-methionine is bound by residues W110, 170 to 172 (GAG), D192, W256, and M288.

It belongs to the class I-like SAM-binding methyltransferase superfamily. RKM5 family.

S-adenosyl-L-methionine-dependent protein-lysine N-methyltransferase that monomethylates 60S ribosomal protein L1 (RPL1A and RPL1B) at 'Lys-46'. This Saccharomyces cerevisiae (strain RM11-1a) (Baker's yeast) protein is Ribosomal lysine N-methyltransferase 5 (RKM5).